A 345-amino-acid chain; its full sequence is Tetraacyldisaccharide 4'-kinase (345 aa).

61-68 contacts ATP; that stretch reads TAGGTGKT.

This sequence belongs to the LpxK family.

The catalysed reaction is a lipid A disaccharide + ATP = a lipid IVA + ADP + H(+). It functions in the pathway glycolipid biosynthesis; lipid IV(A) biosynthesis; lipid IV(A) from (3R)-3-hydroxytetradecanoyl-[acyl-carrier-protein] and UDP-N-acetyl-alpha-D-glucosamine: step 6/6. In terms of biological role, transfers the gamma-phosphate of ATP to the 4'-position of a tetraacyldisaccharide 1-phosphate intermediate (termed DS-1-P) to form tetraacyldisaccharide 1,4'-bis-phosphate (lipid IVA). This Xanthomonas axonopodis pv. citri (strain 306) protein is Tetraacyldisaccharide 4'-kinase.